Here is a 187-residue protein sequence, read N- to C-terminus: Elongation factor P (187 aa).

This sequence belongs to the elongation factor P family.

Its subcellular location is the cytoplasm. The protein operates within protein biosynthesis; polypeptide chain elongation. Functionally, involved in peptide bond synthesis. Stimulates efficient translation and peptide-bond synthesis on native or reconstituted 70S ribosomes in vitro. Probably functions indirectly by altering the affinity of the ribosome for aminoacyl-tRNA, thus increasing their reactivity as acceptors for peptidyl transferase. The protein is Elongation factor P of Corynebacterium kroppenstedtii (strain DSM 44385 / JCM 11950 / CIP 105744 / CCUG 35717).